The following is a 933-amino-acid chain: Phospholipase SGR2 (933 aa).

Positions 1–14 (MEDRETHLGTREVN) are enriched in basic and acidic residues. A disordered region spans residues 1–22 (MEDRETHLGTREVNETSPDLLK). The active site involves Ser444. 2 disordered regions span residues 475 to 517 (PDEE…GQDN) and 553 to 598 (RGGQ…ESVN). Over residues 505 to 517 (QLNNPEKITGQDN) the composition is skewed to polar residues. Residues 553–563 (RGGQEDDHHDS) are compositionally biased toward basic and acidic residues. Residues 593-631 (DKESVNSNNEERIKLLQDEVNSLRSKVAQLLSENARILS) are a coiled coil. The 200-residue stretch at 669 to 868 (LEFKVDTFFA…ALFIIKHLYR (200 aa)) folds into the DDHD domain. Positions 871 to 903 (PDGPNSPTESTEGDDSPKDSSRPHSWIDRREAD) are disordered. Over residues 885 to 902 (DSPKDSSRPHSWIDRREA) the composition is skewed to basic and acidic residues.

As to quaternary structure, forms oligomers. As to expression, expressed in roots, hypocotyls, leaves, stems and floral buds, and, at low levels, in siliques.

Its subcellular location is the vacuole membrane. In terms of biological role, involved in vacuolar formation or function (e.g. formation of vacuolar membrane 'bulbs'). Required for amyloplast sedimentation in the endodermis during shoot gravitropism, which are thus acting as statoliths. Particularly important for the negative gravitropism leading to leaf movement observed in darkness. The chain is Phospholipase SGR2 (SGR2) from Arabidopsis thaliana (Mouse-ear cress).